We begin with the raw amino-acid sequence, 75 residues long: MATKKKTFEEAIAELETIVEALENGSASLEDSLDMYQKGIELTKLCQDKLQSAEQRMAKVVTEAGEEIPFEADGE.

It belongs to the XseB family. As to quaternary structure, heterooligomer composed of large and small subunits.

It is found in the cytoplasm. It carries out the reaction Exonucleolytic cleavage in either 5'- to 3'- or 3'- to 5'-direction to yield nucleoside 5'-phosphates.. Its function is as follows. Bidirectionally degrades single-stranded DNA into large acid-insoluble oligonucleotides, which are then degraded further into small acid-soluble oligonucleotides. This chain is Exodeoxyribonuclease 7 small subunit, found in Listeria innocua serovar 6a (strain ATCC BAA-680 / CLIP 11262).